The primary structure comprises 136 residues: Protein NrdI (136 aa).

Belongs to the NrdI family.

Functionally, probably involved in ribonucleotide reductase function. In Citrobacter koseri (strain ATCC BAA-895 / CDC 4225-83 / SGSC4696), this protein is Protein NrdI.